Consider the following 1246-residue polypeptide: Superkiller complex protein 2 (1246 aa).

The segment at 220–246 is disordered; the sequence is LGGGDEDENEAVGQPGGPRGDTVSASP. Phosphoserine is present on residues Ser-245 and Ser-256. The region spanning 319-475 is the Helicase ATP-binding domain; sequence ILHLERHDSV…WIGRLKRRQI (157 aa). 332–339 is an ATP binding site; it reads AHTSAGKT. Residues 423-426 carry the DEVH box motif; the sequence is DEVH. The 171-residue stretch at 585 to 755 folds into the Helicase C-terminal domain; it reads GLTSLDLTTS…LTYTMILNLL (171 aa).

The protein belongs to the helicase family. SKI2 subfamily. In terms of assembly, component of the SKI complex which consists of SKIC2, SKIC3 and SKIC8. Interacts with HBS1L isoform 2.

The protein resides in the nucleus. Its subcellular location is the cytoplasm. It carries out the reaction ATP + H2O = ADP + phosphate + H(+). Its function is as follows. Helicase component of the SKI complex, a multiprotein complex that assists the RNA-degrading exosome during the mRNA decay and quality-control pathways. The SKI complex catalyzes mRNA extraction from 80S ribosomal complexes in the 3'-5' direction and channels mRNA to the cytosolic exosome for degradation. SKI-mediated extraction of mRNA from stalled ribosomes allow binding of the Pelota-HBS1L complex and subsequent ribosome disassembly by ABCE1 for ribosome recycling. In the nucleus, the SKI complex associates with transcriptionally active genes in a manner dependent on PAF1 complex (PAF1C). The sequence is that of Superkiller complex protein 2 from Homo sapiens (Human).